The primary structure comprises 393 residues: CCA-adding enzyme (393 aa).

ATP contacts are provided by Gly27 and Arg30. Residues Gly27 and Arg30 each contribute to the CTP site. Mg(2+) is bound by residues Asp40 and Asp42. The ATP site is built by Arg111, Asp154, Arg157, Arg160, and Arg163. CTP is bound by residues Arg111, Asp154, Arg157, Arg160, and Arg163.

It belongs to the tRNA nucleotidyltransferase/poly(A) polymerase family. Bacterial CCA-adding enzyme type 3 subfamily. As to quaternary structure, homodimer. Requires Mg(2+) as cofactor.

The catalysed reaction is a tRNA precursor + 2 CTP + ATP = a tRNA with a 3' CCA end + 3 diphosphate. It carries out the reaction a tRNA with a 3' CCA end + 2 CTP + ATP = a tRNA with a 3' CCACCA end + 3 diphosphate. Functionally, catalyzes the addition and repair of the essential 3'-terminal CCA sequence in tRNAs without using a nucleic acid template. Adds these three nucleotides in the order of C, C, and A to the tRNA nucleotide-73, using CTP and ATP as substrates and producing inorganic pyrophosphate. tRNA 3'-terminal CCA addition is required both for tRNA processing and repair. Also involved in tRNA surveillance by mediating tandem CCA addition to generate a CCACCA at the 3' terminus of unstable tRNAs. While stable tRNAs receive only 3'-terminal CCA, unstable tRNAs are marked with CCACCA and rapidly degraded. The polypeptide is CCA-adding enzyme (Listeria monocytogenes serotype 4b (strain CLIP80459)).